The following is a 686-amino-acid chain: Protein MxiA (686 aa).

The next 6 helical transmembrane spans lie at L28 to F52, F105 to I129, A197 to M216, I232 to V256, I274 to G292, and F299 to Y315.

Belongs to the FHIPEP (flagella/HR/invasion proteins export pore) family.

The protein resides in the cell inner membrane. Its function is as follows. Necessary for the secretion of IPA invasins. This Shigella flexneri protein is Protein MxiA (mxiA).